The primary structure comprises 293 residues: LysM and putative peptidoglycan-binding domain-containing protein 4 (293 aa).

At 1–214 (MRQKEVLAKS…VADGADCGIQ (214 aa)) the chain is on the extracellular side. The disordered stretch occupies residues 28–65 (FNNGSGDSGDSSEEESHQVVLRPRGKEHQKNSSQRPGA). The N-linked (GlcNAc...) asparagine glycan is linked to N30. The 45-residue stretch at 71–115 (LQRELAQEDSLNKLALQYGCKVADIKKANNFIREQDLYALKSIKI) folds into the LysM domain. The chain crosses the membrane as a helical span at residues 215–235 (WWNAVFLMLLIGIVLPVFYLV). The Cytoplasmic portion of the chain corresponds to 236-293 (YFKIQATGEPSNGLNATVVPNGSMTLSPVPGQAPRLAIPVPTLPASDSQVSPTTQAGA).

It is found in the membrane. This chain is LysM and putative peptidoglycan-binding domain-containing protein 4 (Lysmd4), found in Mus musculus (Mouse).